The primary structure comprises 469 residues: Chromosomal replication initiator protein DnaA (469 aa).

Positions 1–71 are domain I, interacts with DnaA modulators; it reads MKEFWQTCVS…EALAAEWYQR (71 aa). The domain II stretch occupies residues 71–131; it reads RPVQVTFELP…DAANIVYERS (61 aa). The interval 132-348 is domain III, AAA+ region; that stretch reads RLNTDLTFEN…GALRKVLAYA (217 aa). ATP contacts are provided by Gly-176, Gly-178, Lys-179, and Thr-180. The segment at 349–469 is domain IV, binds dsDNA; that stretch reads RFHGRDVLTV…LHVLEQTLKG (121 aa).

This sequence belongs to the DnaA family. As to quaternary structure, oligomerizes as a right-handed, spiral filament on DNA at oriC.

The protein resides in the cytoplasm. In terms of biological role, plays an essential role in the initiation and regulation of chromosomal replication. ATP-DnaA binds to the origin of replication (oriC) to initiate formation of the DNA replication initiation complex once per cell cycle. Binds the DnaA box (a 9 base pair repeat at the origin) and separates the double-stranded (ds)DNA. Forms a right-handed helical filament on oriC DNA; dsDNA binds to the exterior of the filament while single-stranded (ss)DNA is stabiized in the filament's interior. The ATP-DnaA-oriC complex binds and stabilizes one strand of the AT-rich DNA unwinding element (DUE), permitting loading of DNA polymerase. After initiation quickly degrades to an ADP-DnaA complex that is not apt for DNA replication. Binds acidic phospholipids. The protein is Chromosomal replication initiator protein DnaA of Bordetella parapertussis (strain 12822 / ATCC BAA-587 / NCTC 13253).